Consider the following 501-residue polypeptide: ADP,ATP carrier protein 3 (501 aa).

A run of 12 helical transmembrane segments spans residues 23–43 (LKLF…FGAL), 59–79 (IISF…TVLY), 90–110 (YIFY…AYII), 146–166 (YALM…LMFW), 183–203 (PVLG…LVFF), 227–247 (IMLQ…MLLF), 293–313 (IALL…PWKA), 326–346 (VNFM…FMII), 361–381 (LLTP…IIFI), 387–407 (CFGD…QNIL), 446–466 (FGKS…PTAT), and 470–490 (IIIY…WNVI).

The protein belongs to the ADP/ATP translocase tlc family.

It is found in the cell membrane. Provides the rickettsial cell with host ATP in exchange for rickettsial ADP. This is an obligate exchange system. This energy acquiring activity is an important component of rickettsial parasitism. In Rickettsia conorii (strain ATCC VR-613 / Malish 7), this protein is ADP,ATP carrier protein 3 (tlcC).